Consider the following 156-residue polypeptide: Large ribosomal subunit protein uL15 (156 aa).

A disordered region spans residues arginine 25–valine 48. Positions threonine 34–lysine 43 are enriched in basic residues.

Belongs to the universal ribosomal protein uL15 family. Part of the 50S ribosomal subunit.

Functionally, binds to the 23S rRNA. The sequence is that of Large ribosomal subunit protein uL15 from Wolbachia pipientis subsp. Culex pipiens (strain wPip).